A 242-amino-acid polypeptide reads, in one-letter code: Small ribosomal subunit protein uS2 (242 aa).

This sequence belongs to the universal ribosomal protein uS2 family.

This is Small ribosomal subunit protein uS2 from Shewanella sediminis (strain HAW-EB3).